The primary structure comprises 540 residues: 2,3-bisphosphoglycerate-independent phosphoglycerate mutase (540 aa).

Positions 24 and 74 each coordinate Mn(2+). The active-site Phosphoserine intermediate is Ser-74. Substrate is bound by residues His-135, 165 to 166 (RD), Arg-197, Arg-203, 268 to 271 (RPDR), and Lys-341. Residues Asp-408, His-412, Asp-449, His-450, and His-467 each coordinate Mn(2+).

This sequence belongs to the BPG-independent phosphoglycerate mutase family. As to quaternary structure, monomer. Mn(2+) serves as cofactor.

The enzyme catalyses (2R)-2-phosphoglycerate = (2R)-3-phosphoglycerate. It participates in carbohydrate degradation; glycolysis; pyruvate from D-glyceraldehyde 3-phosphate: step 3/5. Its function is as follows. Catalyzes the interconversion of 2-phosphoglycerate and 3-phosphoglycerate. This chain is 2,3-bisphosphoglycerate-independent phosphoglycerate mutase, found in Prochlorococcus marinus (strain MIT 9303).